Consider the following 121-residue polypeptide: Large ribosomal subunit protein uL18 (121 aa).

Belongs to the universal ribosomal protein uL18 family. As to quaternary structure, part of the 50S ribosomal subunit; part of the 5S rRNA/L5/L18/L25 subcomplex. Contacts the 5S and 23S rRNAs.

In terms of biological role, this is one of the proteins that bind and probably mediate the attachment of the 5S RNA into the large ribosomal subunit, where it forms part of the central protuberance. In Paraburkholderia phytofirmans (strain DSM 17436 / LMG 22146 / PsJN) (Burkholderia phytofirmans), this protein is Large ribosomal subunit protein uL18.